Consider the following 237-residue polypeptide: E3 protein (237 aa).

A compositionally biased stretch (acidic residues) spans 73–103 (VEVVEDEEEEEAAEDVEEPTSEEDSEDEWEE). The disordered stretch occupies residues 73–105 (VEVVEDEEEEEAAEDVEEPTSEEDSEDEWEEGY).

Its function is as follows. Hypothesized to function in the shutoff of host biosyntheses. But it seems dispensable both for host shutoff and for phage multiplication. Its shutoff function is probably not entirely specific to host activities. The protein is E3 protein (44) of Bacillus phage SP01 (Bacteriophage SP01).